A 150-amino-acid chain; its full sequence is Lymphotoxin-beta (150 aa).

One can recognise a THD domain in the interval Ala1–Val149. Residue Asn128 is glycosylated (N-linked (GlcNAc...) asparagine).

It belongs to the tumor necrosis factor family. Heterotrimer of either two LTB and one LTA subunits or (less prevalent) two LTA and one LTB subunits.

The protein resides in the membrane. Its function is as follows. Cytokine that binds to LTBR/TNFRSF3. May play a specific role in immune response regulation. Provides the membrane anchor for the attachment of the heterotrimeric complex to the cell surface. The polypeptide is Lymphotoxin-beta (LTB) (Sus scrofa (Pig)).